Here is a 660-residue protein sequence, read N- to C-terminus: Cysteine-rich receptor-like protein kinase 22 (660 aa).

An N-terminal signal peptide occupies residues 1 to 24 (MKQRSFLSILCFILLAFGVASVSA). 2 Gnk2-homologous domains span residues 25 to 128 (QTCI…NISF) and 137 to 250 (IEPQ…LFTF). The Extracellular portion of the chain corresponds to 25–294 (QTCIENRKYF…DSRGVSAGIV (270 aa)). N-linked (GlcNAc...) asparagine glycans are attached at residues Asn37, Asn53, Asn105, Asn125, Asn191, Asn230, and Asn256. Positions 264–273 (KPPMNVPRPP) are enriched in pro residues. Residues 264–283 (KPPMNVPRPPSVGHGANTTD) form a disordered region. N-linked (GlcNAc...) asparagine glycosylation is found at Asn280 and Asn284. A helical transmembrane segment spans residues 295–315 (VVITVPAVVIVLILVVLGFFI). Residues 316-660 (CWRRKSLQRT…DPLSEGLESG (345 aa)) lie on the Cytoplasmic side of the membrane. The Protein kinase domain maps to 353–632 (FSKSNKLGEG…IVSMLTSNTI (280 aa)). Residues 359 to 367 (LGEGRFGEV) and Lys381 contribute to the ATP site. At Tyr426 the chain carries Phosphotyrosine. Asp478 acts as the Proton acceptor in catalysis. A Phosphoserine modification is found at Ser482. A Phosphothreonine modification is found at Thr518. Tyr526 bears the Phosphotyrosine mark.

The protein belongs to the protein kinase superfamily. Ser/Thr protein kinase family. CRK subfamily.

It is found in the membrane. The catalysed reaction is L-seryl-[protein] + ATP = O-phospho-L-seryl-[protein] + ADP + H(+). The enzyme catalyses L-threonyl-[protein] + ATP = O-phospho-L-threonyl-[protein] + ADP + H(+). The polypeptide is Cysteine-rich receptor-like protein kinase 22 (CRK22) (Arabidopsis thaliana (Mouse-ear cress)).